Here is a 179-residue protein sequence, read N- to C-terminus: MATVLFQKTNERYTDQNEVSAFLASRGVLYEQWDVSKLPAELVDTYTLTDADKQTILDTFQSEITDVSERRGYQTADIISLSDATPNLDELLVNFQKEHHHTDDEVRFIVSGHGVFAIQDDEVGYYNIELNPGDLISVPVNTRHYFTLQEDRKVVAVRIFVTTDGWVPIYEKDPIETAN.

Residues His-99, His-101, Glu-105, and His-144 each contribute to the Fe(2+) site. Ni(2+) contacts are provided by His-99, His-101, Glu-105, and His-144.

It belongs to the acireductone dioxygenase (ARD) family. Monomer. It depends on Fe(2+) as a cofactor. The cofactor is Ni(2+).

It carries out the reaction 1,2-dihydroxy-5-(methylsulfanyl)pent-1-en-3-one + O2 = 3-(methylsulfanyl)propanoate + CO + formate + 2 H(+). It catalyses the reaction 1,2-dihydroxy-5-(methylsulfanyl)pent-1-en-3-one + O2 = 4-methylsulfanyl-2-oxobutanoate + formate + 2 H(+). Its pathway is amino-acid biosynthesis; L-methionine biosynthesis via salvage pathway; L-methionine from S-methyl-5-thio-alpha-D-ribose 1-phosphate: step 5/6. Its function is as follows. Catalyzes 2 different reactions between oxygen and the acireductone 1,2-dihydroxy-3-keto-5-methylthiopentene (DHK-MTPene) depending upon the metal bound in the active site. Fe-containing acireductone dioxygenase (Fe-ARD) produces formate and 2-keto-4-methylthiobutyrate (KMTB), the alpha-ketoacid precursor of methionine in the methionine recycle pathway. Ni-containing acireductone dioxygenase (Ni-ARD) produces methylthiopropionate, carbon monoxide and formate, and does not lie on the methionine recycle pathway. The sequence is that of Acireductone dioxygenase from Exiguobacterium sibiricum (strain DSM 17290 / CCUG 55495 / CIP 109462 / JCM 13490 / 255-15).